A 557-amino-acid chain; its full sequence is Urocanate hydratase (557 aa).

Positions 1 to 20 (MSNPRHNEREVRSPRGDELN) are disordered. Residues 52–53 (GG), Gln130, 176–178 (GMG), Glu196, Arg201, 242–243 (NA), 263–267 (QTSAH), 273–274 (YL), and Tyr322 contribute to the NAD(+) site. Cys410 is an active-site residue. Residue Gly492 coordinates NAD(+).

Belongs to the urocanase family. Requires NAD(+) as cofactor.

It is found in the cytoplasm. The enzyme catalyses 4-imidazolone-5-propanoate = trans-urocanate + H2O. It participates in amino-acid degradation; L-histidine degradation into L-glutamate; N-formimidoyl-L-glutamate from L-histidine: step 2/3. Its function is as follows. Catalyzes the conversion of urocanate to 4-imidazolone-5-propionate. This chain is Urocanate hydratase, found in Brucella abortus (strain S19).